A 159-amino-acid polypeptide reads, in one-letter code: Ribosomal RNA large subunit methyltransferase H (159 aa).

Residues Leu-76, Gly-108, and 127–132 contribute to the S-adenosyl-L-methionine site; that span reads FGRLTL.

It belongs to the RNA methyltransferase RlmH family. As to quaternary structure, homodimer.

The protein resides in the cytoplasm. The enzyme catalyses pseudouridine(1915) in 23S rRNA + S-adenosyl-L-methionine = N(3)-methylpseudouridine(1915) in 23S rRNA + S-adenosyl-L-homocysteine + H(+). In terms of biological role, specifically methylates the pseudouridine at position 1915 (m3Psi1915) in 23S rRNA. The protein is Ribosomal RNA large subunit methyltransferase H of Listeria monocytogenes serotype 4b (strain CLIP80459).